The chain runs to 122 residues: MNFSRRSLRVGAIVNVSVRSLLMRGKNRNKCNSIIFLTVGLLLFIAALALGVLVLFNGYQVNVNANGVDLKPFEIVHFPFAVKTFLSVLTFVLAAFGFVCMVASFLYFVSFKKLKPKANSAS.

2 consecutive transmembrane segments (helical) span residues 34–54 and 91–111; these read IIFL…GVLV and FVLA…FVSF.

The protein resides in the cell membrane. This is an uncharacterized protein from Mycoplasma pneumoniae (strain ATCC 29342 / M129 / Subtype 1) (Mycoplasmoides pneumoniae).